We begin with the raw amino-acid sequence, 215 residues long: MKPFVIAIDGPAASGKGTLARKIATHYRLRHLDTGLTYRGVAHALLQQKLALNDEKSALAYAKKLDFNTLKPALLSSHELGEAASKIALIPALRDILVAKQRDFARIFPGSVLDGRDIGTVVCPDADIKFYLLANIQTRAKRRYQEILKKGAQADYHEILAHLEQRDSRDITRTQSPLKSAQNAHLLDTSELGIEATFKIACALIDPIIKAHIIE.

ATP is bound at residue 10–18 (GPAASGKGT).

Belongs to the cytidylate kinase family. Type 1 subfamily.

It localises to the cytoplasm. The catalysed reaction is CMP + ATP = CDP + ADP. It catalyses the reaction dCMP + ATP = dCDP + ADP. The polypeptide is Cytidylate kinase (Bartonella quintana (strain Toulouse) (Rochalimaea quintana)).